The primary structure comprises 33 residues: GLWSKIKAAGKEAAKAAAKAAGKAALNAVSEAV.

V33 carries the post-translational modification Valine amide.

As to expression, expressed by the skin glands.

Its subcellular location is the secreted. In terms of biological role, has antimicrobial activity. The chain is Dermaseptin-J7 from Phasmahyla jandaia (Jandaia leaf frog).